The primary structure comprises 430 residues: Enolase (430 aa).

Residue Gln166 participates in (2R)-2-phosphoglycerate binding. The Proton donor role is filled by Glu208. Mg(2+) contacts are provided by Asp245, Glu288, and Asp315. Positions 340, 369, 370, and 391 each coordinate (2R)-2-phosphoglycerate. Lys340 functions as the Proton acceptor in the catalytic mechanism.

The protein belongs to the enolase family. Mg(2+) serves as cofactor.

It localises to the cytoplasm. The protein resides in the secreted. The protein localises to the cell surface. It carries out the reaction (2R)-2-phosphoglycerate = phosphoenolpyruvate + H2O. It participates in carbohydrate degradation; glycolysis; pyruvate from D-glyceraldehyde 3-phosphate: step 4/5. Its function is as follows. Catalyzes the reversible conversion of 2-phosphoglycerate (2-PG) into phosphoenolpyruvate (PEP). It is essential for the degradation of carbohydrates via glycolysis. The sequence is that of Enolase from Clostridium kluyveri (strain NBRC 12016).